A 346-amino-acid chain; its full sequence is F(420)H(2) dehydrogenase subunit F (346 aa).

4Fe-4S ferredoxin-type domains are found at residues 5 to 34 (IAEV…VKKA) and 46 to 76 (YEKG…ENEL). [4Fe-4S] cluster-binding residues include C14, C17, C20, C24, C55, C58, C61, and C65.

In terms of assembly, the FPO complex is composed of at least 13 different subunits. [4Fe-4S] cluster is required as a cofactor. FAD serves as cofactor.

The protein localises to the membrane. The protein resides in the cytoplasm. The enzyme catalyses methanophenazine + reduced coenzyme F420-(gamma-L-Glu)(n) = dihydromethanophenazine + oxidized coenzyme F420-(gamma-L-Glu)(n) + H(+). It catalyses the reaction reduced coenzyme F420-(gamma-L-Glu)(n) + 2 oxidized [2Fe-2S]-[ferredoxin] = oxidized coenzyme F420-(gamma-L-Glu)(n) + 2 reduced [2Fe-2S]-[ferredoxin] + 3 H(+). Functionally, component of the F(420)H(2) dehydrogenase (FPO complex) which is part of the energy-conserving F(420)H(2):heterodisulfide oxidoreductase system. The membrane-bound electron transfer system of the complex plays an important role in the metabolism of methylotrophic methanogens when the organisms grow on methanol or methylamines. Catalyzes the oxidation of methanophenazine to dihydromethanophenazine. It shuttles electrons from F(420)H(2), via FAD and iron-sulfur (Fe-S) centers, to methanophenazine (an electron carrier in the membrane). It couples the redox reaction to proton translocation (for every two electrons transferred, two hydrogen ions are translocated across the cytoplasmic membrane), and thus conserves the redox energy in a proton gradient. It also catalyzes the oxidation of F(420)H(2) with quinones such as 2,3-dimethyl-1,4-naphthoquinone, 2-methyl-1,4-naphthoquinone and tetramethyl-p-benzoquinone. Might have a dual function, acting as an electron input module when connected to the membrane integral Fpo complex, or as a soluble single subunit, being involved in the reoxydation of reduced ferredoxin in the cytoplasm. In Methanosarcina mazei (strain ATCC BAA-159 / DSM 3647 / Goe1 / Go1 / JCM 11833 / OCM 88) (Methanosarcina frisia), this protein is F(420)H(2) dehydrogenase subunit F (fpoF).